Here is a 276-residue protein sequence, read N- to C-terminus: Aldo-keto reductase Mkms_1985 (276 aa).

Tyr50 serves as the catalytic Proton donor. Residues Leu190, Ile228, Lys230, Ser231, Val232, Arg236, Ser239, and Asn240 each coordinate NADPH. Positions 257-276 are disordered; that stretch reads SSLEDGSRLGPDPKTFNFTG.

Belongs to the aldo/keto reductase family.

The chain is Aldo-keto reductase Mkms_1985 from Mycobacterium sp. (strain KMS).